Here is a 654-residue protein sequence, read N- to C-terminus: Fructose-1,6-bisphosphatase class 3 (654 aa).

It belongs to the FBPase class 3 family. Requires Mn(2+) as cofactor.

The catalysed reaction is beta-D-fructose 1,6-bisphosphate + H2O = beta-D-fructose 6-phosphate + phosphate. The protein operates within carbohydrate biosynthesis; gluconeogenesis. This Staphylococcus epidermidis (strain ATCC 35984 / DSM 28319 / BCRC 17069 / CCUG 31568 / BM 3577 / RP62A) protein is Fructose-1,6-bisphosphatase class 3.